A 98-amino-acid polypeptide reads, in one-letter code: NADH-ubiquinone oxidoreductase chain 4L (98 aa).

Helical transmembrane passes span 1–21, 29–49, and 61–81; these read MTMV…GLLM, SLLC…VTIL, and IILL…LVMV.

Belongs to the complex I subunit 4L family. In terms of assembly, core subunit of respiratory chain NADH dehydrogenase (Complex I) which is composed of 45 different subunits.

Its subcellular location is the mitochondrion inner membrane. The catalysed reaction is a ubiquinone + NADH + 5 H(+)(in) = a ubiquinol + NAD(+) + 4 H(+)(out). In terms of biological role, core subunit of the mitochondrial membrane respiratory chain NADH dehydrogenase (Complex I) which catalyzes electron transfer from NADH through the respiratory chain, using ubiquinone as an electron acceptor. Part of the enzyme membrane arm which is embedded in the lipid bilayer and involved in proton translocation. The polypeptide is NADH-ubiquinone oxidoreductase chain 4L (MT-ND4L) (Leptonychotes weddellii (Weddell seal)).